The primary structure comprises 378 residues: MSKRDFYEVLGVPKNASDEEIKKAYRKLAMKHHPDRNQGDAAKPAEEKFKEAKEAYEMLSDPQKRAAYDQFGHAGVDPNMRGPGGAGAEGFGGFAEAFGDIFGDMFGGRRGAGGGRQVYRGNDLSYAMDITLEEAAKGKEAQIRIPSWENCETCHGSGAKPGTSAKTCTTCSGTGTVQMRQGFFSVQQTCPHCRGTGKIIPEPCVTCHGQGKVKKQKTLEVKIPAGIDDGMRIRSVGNGEPGTNGGPPGDLYIEIRLKKHEIFERDGDDLHCQVPVSFITAALGGEIEVPTLQGKAAIDIPEGTQAGKQFRLRGKGIKGVRASYPGDLYCHIVVETPVKLTEHQRKLLRELDDSLKKGGGKHSPSGESWTDRLKNLFT.

One can recognise a J domain in the interval 5-72 (DFYEVLGVPK…QKRAAYDQFG (68 aa)). Residues 138 to 216 (GKEAQIRIPS…CHGQGKVKKQ (79 aa)) form a CR-type zinc finger. Cys-151, Cys-154, Cys-168, Cys-171, Cys-190, Cys-193, Cys-204, and Cys-207 together coordinate Zn(2+). 4 CXXCXGXG motif repeats span residues 151-158 (CETCHGSG), 168-175 (CTTCSGTG), 190-197 (CPHCRGTG), and 204-211 (CVTCHGQG). A disordered region spans residues 354–378 (SLKKGGGKHSPSGESWTDRLKNLFT). Residues 369–378 (WTDRLKNLFT) are compositionally biased toward basic and acidic residues.

Belongs to the DnaJ family. Homodimer. The cofactor is Zn(2+).

It is found in the cytoplasm. Participates actively in the response to hyperosmotic and heat shock by preventing the aggregation of stress-denatured proteins and by disaggregating proteins, also in an autonomous, DnaK-independent fashion. Unfolded proteins bind initially to DnaJ; upon interaction with the DnaJ-bound protein, DnaK hydrolyzes its bound ATP, resulting in the formation of a stable complex. GrpE releases ADP from DnaK; ATP binding to DnaK triggers the release of the substrate protein, thus completing the reaction cycle. Several rounds of ATP-dependent interactions between DnaJ, DnaK and GrpE are required for fully efficient folding. Also involved, together with DnaK and GrpE, in the DNA replication of plasmids through activation of initiation proteins. This is Chaperone protein DnaJ from Paracidovorax citrulli (strain AAC00-1) (Acidovorax citrulli).